Reading from the N-terminus, the 285-residue chain is Probable endonuclease 4 (285 aa).

His-69, His-109, Glu-145, Asp-179, His-182, His-216, Asp-229, His-231, and Glu-261 together coordinate Zn(2+).

This sequence belongs to the AP endonuclease 2 family. It depends on Zn(2+) as a cofactor.

The catalysed reaction is Endonucleolytic cleavage to 5'-phosphooligonucleotide end-products.. Its function is as follows. Endonuclease IV plays a role in DNA repair. It cleaves phosphodiester bonds at apurinic or apyrimidinic (AP) sites, generating a 3'-hydroxyl group and a 5'-terminal sugar phosphate. The protein is Probable endonuclease 4 of Citrobacter koseri (strain ATCC BAA-895 / CDC 4225-83 / SGSC4696).